The sequence spans 62 residues: Photosystem II reaction center protein Z (62 aa).

2 helical membrane passes run 8–28 (AVFA…VVFA) and 41–61 (FSGT…NSLI).

The protein belongs to the PsbZ family. PSII is composed of 1 copy each of membrane proteins PsbA, PsbB, PsbC, PsbD, PsbE, PsbF, PsbH, PsbI, PsbJ, PsbK, PsbL, PsbM, PsbT, PsbY, PsbZ, Psb30/Ycf12, at least 3 peripheral proteins of the oxygen-evolving complex and a large number of cofactors. It forms dimeric complexes.

The protein resides in the plastid. It localises to the chloroplast thylakoid membrane. Its function is as follows. May control the interaction of photosystem II (PSII) cores with the light-harvesting antenna, regulates electron flow through the 2 photosystem reaction centers. PSII is a light-driven water plastoquinone oxidoreductase, using light energy to abstract electrons from H(2)O, generating a proton gradient subsequently used for ATP formation. The polypeptide is Photosystem II reaction center protein Z (Oenothera elata subsp. hookeri (Hooker's evening primrose)).